A 390-amino-acid polypeptide reads, in one-letter code: Homeobox protein Meis1 (390 aa).

The region spanning 108-191 (GGDVCSSESF…PIDLVIDDRD (84 aa)) is the MEIS N-terminal domain. Residues 188 to 202 (DDRDGGSKSDSEDLT) show a composition bias toward basic and acidic residues. The segment at 188–279 (DDRDGGSKSD…KKRNKGRGIF (92 aa)) is disordered. The homeobox; TALE-type DNA-binding region spans 272–334 (RNKGRGIFPK…NARRRIVQPM (63 aa)). Positions 299-329 (YPSEEQKKQLAQDTGLTILQVNNWFINARRR) are interaction with DNA.

It belongs to the TALE/MEIS homeobox family. Interacts with pbx1 isoform b. In terms of tissue distribution, in the embryo, displays a broad expression pattern with high levels observed in tissues of neural cell fate such as midbrain, hindbrain, dorsal portion of the neural tube, and neural crest-derived branchial arches. Widely expressed in the adult with highest levels in brain and spleen.

The protein resides in the cytoplasm. Its subcellular location is the nucleus. Induces expression of a number of neural crest marker genes as part of a heterodimer with isoform b of pbx1, to specify neural crest cell fate. Binds to a highly conserved region in the promoter of the neural crest marker gene zic3. In Xenopus laevis (African clawed frog), this protein is Homeobox protein Meis1 (meis1).